Reading from the N-terminus, the 233-residue chain is Small ribosomal subunit protein uS2 (233 aa).

Belongs to the universal ribosomal protein uS2 family.

The chain is Small ribosomal subunit protein uS2 from Bacillus mycoides (strain KBAB4) (Bacillus weihenstephanensis).